We begin with the raw amino-acid sequence, 85 residues long: Large ribosomal subunit protein bL27 (85 aa).

Positions M1–K24 are disordered.

The protein belongs to the bacterial ribosomal protein bL27 family.

This Syntrophus aciditrophicus (strain SB) protein is Large ribosomal subunit protein bL27.